The following is a 405-amino-acid chain: Na(+)-translocating NADH-quinone reductase subunit F (405 aa).

Residues 3–23 traverse the membrane as a helical segment; that stretch reads IILGIVMFTVIVLVLALMILF. The 93-residue stretch at 32 to 124 folds into the 2Fe-2S ferredoxin-type domain; the sequence is GDITIKVNGE…DMDIEVPEEV (93 aa). Residues Cys-67, Cys-73, Cys-76, and Cys-108 each coordinate [2Fe-2S] cluster. In terms of domain architecture, FAD-binding FR-type spans 127 to 267; it reads VKKWECTVIS…SGPFGEFFAK (141 aa). Positions 270–387 are catalytic; it reads DAEMVFIGGG…PIMNQSVIKM (118 aa).

Belongs to the NqrF family. In terms of assembly, composed of six subunits; NqrA, NqrB, NqrC, NqrD, NqrE and NqrF. [2Fe-2S] cluster serves as cofactor. The cofactor is FAD.

It is found in the cell inner membrane. It catalyses the reaction a ubiquinone + n Na(+)(in) + NADH + H(+) = a ubiquinol + n Na(+)(out) + NAD(+). Its function is as follows. NQR complex catalyzes the reduction of ubiquinone-1 to ubiquinol by two successive reactions, coupled with the transport of Na(+) ions from the cytoplasm to the periplasm. The first step is catalyzed by NqrF, which accepts electrons from NADH and reduces ubiquinone-1 to ubisemiquinone by a one-electron transfer pathway. This is Na(+)-translocating NADH-quinone reductase subunit F from Neisseria meningitidis serogroup B (strain ATCC BAA-335 / MC58).